The sequence spans 228 residues: MAYPFQLGFQDATSPIMEELLHFHDHTLMIVFLISSLVLYIISLMLTTKLTHTSTMDAQEVETIWTILPAIILILIALPSLRILYMMDEINNPALTVKTMGHQWYWSYEYTDYEDLTFDSYMIPTSDLKPGEMRLLEVDNRVVLPMEMTIRMLVSSEDVLHSWAVPSLGLKTDAIPGRLNQTTLMSTRPGLYYGQCSEICGSNHSFMPIVLELVPLKYFEKWSTSMLT.

At 1 to 14 (MAYPFQLGFQDATS) the chain is on the mitochondrial intermembrane side. A helical membrane pass occupies residues 15 to 45 (PIMEELLHFHDHTLMIVFLISSLVLYIISLM). Topologically, residues 46–59 (LTTKLTHTSTMDAQ) are mitochondrial matrix. The helical transmembrane segment at 60–87 (EVETIWTILPAIILILIALPSLRILYMM) threads the bilayer. Residues 88–228 (DEINNPALTV…FEKWSTSMLT (141 aa)) are Mitochondrial intermembrane-facing. The Cu cation site is built by H161, C196, E198, C200, H204, and M207. A Mg(2+)-binding site is contributed by E198. Position 218 is a phosphotyrosine (Y218).

It belongs to the cytochrome c oxidase subunit 2 family. Component of the cytochrome c oxidase (complex IV, CIV), a multisubunit enzyme composed of 14 subunits. The complex is composed of a catalytic core of 3 subunits MT-CO1, MT-CO2 and MT-CO3, encoded in the mitochondrial DNA, and 11 supernumerary subunits COX4I, COX5A, COX5B, COX6A, COX6B, COX6C, COX7A, COX7B, COX7C, COX8 and NDUFA4, which are encoded in the nuclear genome. The complex exists as a monomer or a dimer and forms supercomplexes (SCs) in the inner mitochondrial membrane with NADH-ubiquinone oxidoreductase (complex I, CI) and ubiquinol-cytochrome c oxidoreductase (cytochrome b-c1 complex, complex III, CIII), resulting in different assemblies (supercomplex SCI(1)III(2)IV(1) and megacomplex MCI(2)III(2)IV(2)). Found in a complex with TMEM177, COA6, COX18, COX20, SCO1 and SCO2. Interacts with TMEM177 in a COX20-dependent manner. Interacts with COX20. Interacts with COX16. The cofactor is Cu cation.

It localises to the mitochondrion inner membrane. The catalysed reaction is 4 Fe(II)-[cytochrome c] + O2 + 8 H(+)(in) = 4 Fe(III)-[cytochrome c] + 2 H2O + 4 H(+)(out). Its function is as follows. Component of the cytochrome c oxidase, the last enzyme in the mitochondrial electron transport chain which drives oxidative phosphorylation. The respiratory chain contains 3 multisubunit complexes succinate dehydrogenase (complex II, CII), ubiquinol-cytochrome c oxidoreductase (cytochrome b-c1 complex, complex III, CIII) and cytochrome c oxidase (complex IV, CIV), that cooperate to transfer electrons derived from NADH and succinate to molecular oxygen, creating an electrochemical gradient over the inner membrane that drives transmembrane transport and the ATP synthase. Cytochrome c oxidase is the component of the respiratory chain that catalyzes the reduction of oxygen to water. Electrons originating from reduced cytochrome c in the intermembrane space (IMS) are transferred via the dinuclear copper A center (CU(A)) of subunit 2 and heme A of subunit 1 to the active site in subunit 1, a binuclear center (BNC) formed by heme A3 and copper B (CU(B)). The BNC reduces molecular oxygen to 2 water molecules using 4 electrons from cytochrome c in the IMS and 4 protons from the mitochondrial matrix. This chain is Cytochrome c oxidase subunit 2 (MT-CO2), found in Sus scrofa (Pig).